The following is a 135-amino-acid chain: P2Y purinoceptor 4 (135 aa).

A helical transmembrane segment spans residues 1–25 (VHFSSSVMVLLFGLPFLVTLVCYGL). Over 26 to 49 (MALRLCRPLPGAGQSSSRLRSLRT) the chain is Cytoplasmic. Residues 50–72 (IAVVMTVFAVCLVPFHITRTIYY) form a helical membrane-spanning segment. The Extracellular portion of the chain corresponds to 73–90 (LARLLKADCQILNIVNVV). Residues 91–112 (YKVTRPLASANSCLDPLLYLFT) form a helical membrane-spanning segment. Over 113–135 (GDKYRHQLQRLCRVSAPQRRITA) the chain is Cytoplasmic.

The protein belongs to the G-protein coupled receptor 1 family. Expressed in brain, heart, stria vascularis and vestibular labyrinth.

The protein localises to the cell membrane. Functionally, receptor for ATP and UTP coupled to G-proteins that activate a phosphatidylinositol-calcium second messenger system. Not activated by UDP. The protein is P2Y purinoceptor 4 (P2RY4) of Meriones unguiculatus (Mongolian jird).